The sequence spans 271 residues: 3-methyl-2-oxobutanoate hydroxymethyltransferase 1 (271 aa).

Mg(2+) contacts are provided by D53 and D92. Residues 53 to 54 (DS), D92, and K120 each bind 3-methyl-2-oxobutanoate. E122 contributes to the Mg(2+) binding site. The Proton acceptor role is filled by E189.

Belongs to the PanB family. In terms of assembly, homodecamer; pentamer of dimers. Mg(2+) serves as cofactor.

The protein localises to the cytoplasm. It carries out the reaction 3-methyl-2-oxobutanoate + (6R)-5,10-methylene-5,6,7,8-tetrahydrofolate + H2O = 2-dehydropantoate + (6S)-5,6,7,8-tetrahydrofolate. The protein operates within cofactor biosynthesis; (R)-pantothenate biosynthesis; (R)-pantoate from 3-methyl-2-oxobutanoate: step 1/2. Catalyzes the reversible reaction in which hydroxymethyl group from 5,10-methylenetetrahydrofolate is transferred onto alpha-ketoisovalerate to form ketopantoate. This Burkholderia cenocepacia (strain HI2424) protein is 3-methyl-2-oxobutanoate hydroxymethyltransferase 1.